A 370-amino-acid polypeptide reads, in one-letter code: Ubiquinone biosynthesis O-methyltransferase, mitochondrial (370 aa).

The transit peptide at 1-86 directs the protein to the mitochondrion; the sequence is MWGGSKLSSS…SYRLPWTRPY (86 aa). S-adenosyl-L-methionine is bound at residue Arg-125. N6-acetyllysine is present on residues Lys-144 and Lys-150. The S-adenosyl-L-methionine site is built by Gly-155 and Asp-176. Lys-197 is subject to N6-acetyllysine. Residue Ser-223 coordinates S-adenosyl-L-methionine. Residues Glu-224, Glu-227, and His-228 each contribute to the Mg(2+) site.

It belongs to the class I-like SAM-binding methyltransferase superfamily. UbiG/COQ3 family. Component of a multi-subunit COQ enzyme complex, composed of at least COQ3, COQ4, COQ5, COQ6, COQ7 and COQ9. Mg(2+) is required as a cofactor.

It is found in the mitochondrion inner membrane. It catalyses the reaction 3,4-dihydroxy-5-(all-trans-decaprenyl)benzoate + S-adenosyl-L-methionine = 4-hydroxy-3-methoxy-5-(all-trans-decaprenyl)benzoate + S-adenosyl-L-homocysteine + H(+). The catalysed reaction is a 3-demethylubiquinone + S-adenosyl-L-methionine = a ubiquinone + S-adenosyl-L-homocysteine. It carries out the reaction 3-demethylubiquinol-10 + S-adenosyl-L-methionine = ubiquinol-10 + S-adenosyl-L-homocysteine + H(+). The protein operates within cofactor biosynthesis; ubiquinone biosynthesis. Its function is as follows. O-methyltransferase required for two non-consecutive steps during ubiquinone biosynthesis. Catalyzes the 2 O-methylation of 3,4-dihydroxy-5-(all-trans-decaprenyl)benzoic acid into 4-hydroxy-3-methoxy-5-(all-trans-decaprenyl)benzoic acid. Also catalyzes the last step of ubiquinone biosynthesis by mediating methylation of 3-demethylubiquinone into ubiquinone. Also able to mediate the methylation of 3-demethylubiquinol-10 into ubiquinol-10. The sequence is that of Ubiquinone biosynthesis O-methyltransferase, mitochondrial from Bos taurus (Bovine).